The chain runs to 510 residues: UDP-N-acetylmuramoylalanine--D-glutamate ligase (510 aa).

138 to 144 (GTNGKTT) contributes to the ATP binding site. A disordered region spans residues 294–316 (FDEPAPAPRRKKDAPPPTRAGGR).

The protein belongs to the MurCDEF family.

It localises to the cytoplasm. The catalysed reaction is UDP-N-acetyl-alpha-D-muramoyl-L-alanine + D-glutamate + ATP = UDP-N-acetyl-alpha-D-muramoyl-L-alanyl-D-glutamate + ADP + phosphate + H(+). It participates in cell wall biogenesis; peptidoglycan biosynthesis. Its function is as follows. Cell wall formation. Catalyzes the addition of glutamate to the nucleotide precursor UDP-N-acetylmuramoyl-L-alanine (UMA). The protein is UDP-N-acetylmuramoylalanine--D-glutamate ligase of Bordetella pertussis (strain Tohama I / ATCC BAA-589 / NCTC 13251).